A 208-amino-acid chain; its full sequence is UPF0637 protein BCG9842_B1177 (208 aa).

Belongs to the UPF0637 family.

The chain is UPF0637 protein BCG9842_B1177 from Bacillus cereus (strain G9842).